Here is a 249-residue protein sequence, read N- to C-terminus: Low affinity immunoglobulin gamma Fc region receptor III-A (249 aa).

Residues 1-20 (MWQLLLPTALVLTAFSGIQA) form the signal peptide. Over 21 to 203 (GLQKAVVNLD…SPSMFPPWHQ (183 aa)) the chain is Extracellular. Ig-like C2-type domains are found at residues 22-102 (LQKA…VQLE) and 119-188 (EGDP…FRIS). Cystine bridges form between C46–C88 and C127–C171. N62, N164, and N179 each carry an N-linked (GlcNAc...) asparagine glycan. Residues 204–224 (ITFCLLIGLLFAIDTVLYFSV) form a helical membrane-spanning segment. At 225-249 (RRGLQSPVADYEEPKIQWSKEPQDK) the chain is on the cytoplasmic side. Y235 carries the phosphotyrosine modification.

As to quaternary structure, forms a heterooligomeric complex with ITAM-containing signaling subunits FCER1G. Interacts (via transmembrane domain) with signaling subunits; this interaction is a prerequisite for receptor complex expression on the cell surface and intracellular signal transduction. Binds the Fc region of antigen-complexed IgG. Post-translationally, N-glycosylated. Phosphorylated following receptor ligation. As to expression, detected on myeloid cells, peripheral blood monocytes, splenic and bone marrow dendritic cells, and thioglycollate-elicited macrophages and neutrophils but absent from lymphoid populations with no expression observed on T cells, B cells, NK cells or other granulocytes (at protein level). Expressed in peripheral blood leukocytes, spleen, liver, thymus and small intestine. Expressed in splenic dendritic cell subsets (at protein level).

It localises to the cell membrane. Functionally, receptor for the invariable Fc fragment of immunoglobulin gamma (IgG). Binds with intermediate affinity to both IgG2a and IgG2b. Can bind to IgG2a and IgG2b monomers. Does not display binding to IgG1 or IgG3. Recognizes neutralizing virus-specific IgGs displayed on the cell surface of infected cells and triggers antibody-dependent cellular cytotoxicity (ADCC). Confers protection to lethal influenza virus infection. On splenic dendritic cells, uptakes antigen immune complexes and efficiently divert them into MHC class I and II antigen presentation pathways to provide for superior priming of CD4-positive and CD8-positive T cell immune responses. Mediates neutrophil activation by IgG complexes redundantly with FCGR2A. Plays a role in promoting bone resorption by enhancing osteoclast differentiation following binding to IgG2a. Also acts as a receptor for the Fc region of immunoglobulin epsilon (IgE). Binds with low affinity to both the a and b allotypes of IgE. Has also been shown to bind to IgE allotype a only but not to allotype b. Binds aggregated IgE but not the monomeric form and bound monomeric IgG is readily displaced by IgE complexes. Binding to IgE promotes macrophage-mediated phagocytosis, antigen presentation to T cells, production of pro-inflammatory cytokines and the late phase of cutaneous allergic reactions. Mediates enhanced ADCC in response to afucosylated IgGs. This Mus musculus (Mouse) protein is Low affinity immunoglobulin gamma Fc region receptor III-A.